A 178-amino-acid chain; its full sequence is SsrA-binding protein (178 aa).

A disordered region spans residues 1–28 (MAKKSTPVDSGRSKGKKASAPRGGGPAV).

The protein belongs to the SmpB family.

It is found in the cytoplasm. Its function is as follows. Required for rescue of stalled ribosomes mediated by trans-translation. Binds to transfer-messenger RNA (tmRNA), required for stable association of tmRNA with ribosomes. tmRNA and SmpB together mimic tRNA shape, replacing the anticodon stem-loop with SmpB. tmRNA is encoded by the ssrA gene; the 2 termini fold to resemble tRNA(Ala) and it encodes a 'tag peptide', a short internal open reading frame. During trans-translation Ala-aminoacylated tmRNA acts like a tRNA, entering the A-site of stalled ribosomes, displacing the stalled mRNA. The ribosome then switches to translate the ORF on the tmRNA; the nascent peptide is terminated with the 'tag peptide' encoded by the tmRNA and targeted for degradation. The ribosome is freed to recommence translation, which seems to be the essential function of trans-translation. This Corynebacterium urealyticum (strain ATCC 43042 / DSM 7109) protein is SsrA-binding protein.